The following is a 528-amino-acid chain: MSLSPCRARRGFSARSACSAQSVGRGRTGFSSRSLSSFGGCRGGSRGRTWGSWGRLGVRLGEGSGGPGLSLCPPGGIQQVTINQSLLIPPKIEIDPQFQVVRTQETQQIRVLNNQFASFIDKVRFLEQQNKVLETKWHLLQQQGLSDRPQGLESFFEAYLVRLRTQLEELQKKRGSLDAELKSCQGQEEEYKAKYEHEANRRATLENDFVVLKKDADGVLLSKMEMESKVEDLKEYICFLKHLYEEELGQLQTQASDMSVVLSMDNNRCLDFRDLIAEVRARYEEIARTSKAEAEMLYQTKYRELQACAQLHGNSMKETKVQITQLQQTIKKLQSQIETVKSQNASLQVAIADAEQRGELALKDAQTKLAELEAALRTAKQDIARLLHDYQELMSVKLSLDIEIATYRRLLEGEECRMSGECASQVTISVGGGSTVVSGGADGGLAGTCGLGGVKGSFGSRCSSVVKGGSSIVKGGSSVVIGGSSIILGSEQGPAVGSGSVSGSSSSSTSHTILKKTVESSLKTSVTY.

Residues 1 to 104 are head; that stretch reads MSLSPCRARR…DPQFQVVRTQ (104 aa). Residues 23–45 form a disordered region; the sequence is VGRGRTGFSSRSLSSFGGCRGGS. Residues 24–39 are compositionally biased toward low complexity; sequence GRGRTGFSSRSLSSFG. A coil 1A region spans residues 105-140; it reads ETQQIRVLNNQFASFIDKVRFLEQQNKVLETKWHLL. The IF rod domain occupies 105-418; it reads ETQQIRVLNN…RLLEGEECRM (314 aa). A linker 1 region spans residues 141–159; it reads QQQGLSDRPQGLESFFEAY. The coil 1B stretch occupies residues 160-252; it reads LVRLRTQLEE…LYEEELGQLQ (93 aa). The tract at residues 253 to 275 is linker 12; it reads TQASDMSVVLSMDNNRCLDFRDL. The segment at 276-415 is coil 2; it reads IAEVRARYEE…TYRRLLEGEE (140 aa). The tail stretch occupies residues 416–528; that stretch reads CRMSGECASQ…ESSLKTSVTY (113 aa).

It belongs to the intermediate filament family. As to quaternary structure, heterotetramer of two type I and two type II keratins.

This chain is Keratin, type II cytoskeletal 78 (KRT78), found in Bos taurus (Bovine).